A 217-amino-acid chain; its full sequence is Putative 8-oxo-dGTP diphosphatase 3 (217 aa).

Positions 30-164 (GRYGAAGLLL…PGFAASWQRL (135 aa)) constitute a Nudix hydrolase domain. A disordered region spans residues 67-92 (LPGGARDSHETPEQTAVRESSEEAGL). Mg(2+)-binding residues include Gly-70, Glu-85, Glu-88, and Glu-89. A Nudix box motif is present at residues 70–91 (GARDSHETPEQTAVRESSEEAG).

This sequence belongs to the Nudix hydrolase family. Mg(2+) serves as cofactor. Requires Mn(2+) as cofactor.

The enzyme catalyses 8-oxo-dGTP + H2O = 8-oxo-dGMP + diphosphate + H(+). In terms of biological role, may be involved in the GO system responsible for removing an oxidatively damaged form of guanine (7,8-dihydro-8-oxoguanine, 8-oxo-dGTP) from DNA and the nucleotide pool. 8-oxo-dGTP is inserted opposite dA and dC residues of template DNA with almost equal efficiency thus leading to A.T to G.C transversions. MutT specifically degrades 8-oxo-dGTP to the monophosphate. The sequence is that of Putative 8-oxo-dGTP diphosphatase 3 (mutT3) from Mycobacterium tuberculosis (strain CDC 1551 / Oshkosh).